Consider the following 558-residue polypeptide: Potassium-transporting ATPase potassium-binding subunit 1 (558 aa).

The next 12 membrane-spanning stretches (helical) occupy residues M1–L21, F66–L86, M127–A147, I166–M186, I245–L265, A281–W301, F327–V347, L354–G374, V377–V397, I416–M436, I482–I502, and I531–I551.

The protein belongs to the KdpA family. As to quaternary structure, the system is composed of three essential subunits: KdpA, KdpB and KdpC.

The protein localises to the cell membrane. In terms of biological role, part of the high-affinity ATP-driven potassium transport (or Kdp) system, which catalyzes the hydrolysis of ATP coupled with the electrogenic transport of potassium into the cytoplasm. This subunit binds the extracellular potassium ions and delivers the ions to the membrane domain of KdpB through an intramembrane tunnel. The polypeptide is Potassium-transporting ATPase potassium-binding subunit 1 (Staphylococcus aureus (strain Mu50 / ATCC 700699)).